Reading from the N-terminus, the 126-residue chain is Hydrogenase maturation factor HypA (126 aa).

Histidine 2 provides a ligand contact to Ni(2+). Zn(2+) contacts are provided by cysteine 78, cysteine 81, cysteine 97, and cysteine 100.

This sequence belongs to the HypA/HybF family.

Functionally, involved in the maturation of [NiFe] hydrogenases. Required for nickel insertion into the metal center of the hydrogenase. In Methanococcus maripaludis (strain DSM 14266 / JCM 13030 / NBRC 101832 / S2 / LL), this protein is Hydrogenase maturation factor HypA.